Consider the following 343-residue polypeptide: MKALAKLERAPGLTLTDVKKPEVGHNDVMIRITRTAICGTDIHIWKWDDWAQKTIPVPMHVGHEYVGEIVEMGQEVRGFAIGDRVSGEGHITCGFCRNCRAGRRHLCRNTVGVGVNREGAFAEYLVIPAFNAFKIPPEISDDLAAIFDPFGNATHTALSFNLVGEDVLITGAGPIGIMAVAIAKHVGARNVVITDVNDYRLELARKMGATRAVNVSRESLRDVMADLHMAEGFDVGLEMSGVPSAFTGMLEAMNHGGKIALLGIPPAQTAIDWTQVIFKGLEIKGIYGREMFETWYKMVAMLQSGLDLSPILTHHFKVDDYREAFATMLSGESGKVILDWTAA.

C38 serves as a coordination point for Zn(2+). Residues T40 and H43 each act as charge relay system in the active site. The Zn(2+) site is built by H63, E64, C93, C96, C99, and C107. NAD(+) is bound by residues I175, D195, R200, 262-264, and 286-287; these read LGI and IY.

Belongs to the zinc-containing alcohol dehydrogenase family. Homotetramer. Zn(2+) is required as a cofactor.

It is found in the cytoplasm. The enzyme catalyses L-threonine + NAD(+) = (2S)-2-amino-3-oxobutanoate + NADH + H(+). It functions in the pathway amino-acid degradation; L-threonine degradation via oxydo-reductase pathway; glycine from L-threonine: step 1/2. Functionally, catalyzes the NAD(+)-dependent oxidation of L-threonine to 2-amino-3-ketobutyrate. In Paraburkholderia xenovorans (strain LB400), this protein is L-threonine 3-dehydrogenase.